Consider the following 340-residue polypeptide: GATA transcription factor 20 (340 aa).

Residues 1–88 (MSHHDGSKPY…MEEDEDAQHH (88 aa)) form a disordered region. Residues 25–47 (ADDAAAHVAPTVDHLAAVAAEAE) show a composition bias toward low complexity. Over residues 48 to 60 (AMARFEEEHRALG) the composition is skewed to basic and acidic residues. Residues 61 to 84 (AEEEYEEEEDELEEEEEEMEEDED) are compositionally biased toward acidic residues. A Tify domain is found at 121 to 156 (QPMASNQLTLSFQGEVYVFDSVSPDKVQAVLLLLGG). Positions 182-224 (RVASLMRFREKRKERNFDKKIRYSVRKEVALRMQRNRGQFTSS) constitute a CCT domain. The tract at residues 215–253 (QRNRGQFTSSKPKGDEATSELTASDGSPNWGSVEGRPPS) is disordered. A compositionally biased stretch (polar residues) spans 233 to 244 (SELTASDGSPNW). Residues 257-284 (CHHCGINAKATPMMRRGPDGPRTLCNAC) form a GATA-type zinc finger. The span at 313-325 (DGNGSAAAPTTEQ) shows a compositional bias: polar residues. The interval 313 to 340 (DGNGSAAAPTTEQEIPAPATVNGHESST) is disordered.

The protein belongs to the type IV zinc-finger family. Class C subfamily.

It localises to the nucleus. Transcriptional activator that specifically binds 5'-GATA-3' or 5'-GAT-3' motifs within gene promoters. The polypeptide is GATA transcription factor 20 (Oryza sativa subsp. japonica (Rice)).